Reading from the N-terminus, the 209-residue chain is Protein GrpE (209 aa).

Polar residues predominate over residues 1 to 13 (MSNDSSKAKQNQV). The disordered stretch occupies residues 1–33 (MSNDSSKAKQNQVDEAVEGEILTESEVETGNDE). Acidic residues predominate over residues 15 to 31 (EAVEGEILTESEVETGN).

Belongs to the GrpE family. In terms of assembly, homodimer.

It localises to the cytoplasm. Its function is as follows. Participates actively in the response to hyperosmotic and heat shock by preventing the aggregation of stress-denatured proteins, in association with DnaK and GrpE. It is the nucleotide exchange factor for DnaK and may function as a thermosensor. Unfolded proteins bind initially to DnaJ; upon interaction with the DnaJ-bound protein, DnaK hydrolyzes its bound ATP, resulting in the formation of a stable complex. GrpE releases ADP from DnaK; ATP binding to DnaK triggers the release of the substrate protein, thus completing the reaction cycle. Several rounds of ATP-dependent interactions between DnaJ, DnaK and GrpE are required for fully efficient folding. This is Protein GrpE from Shewanella woodyi (strain ATCC 51908 / MS32).